The primary structure comprises 622 residues: tRNA uridine 5-carboxymethylaminomethyl modification enzyme MnmG (622 aa).

G10–G15 is an FAD binding site. An NAD(+)-binding site is contributed by G269–F283.

The protein belongs to the MnmG family. As to quaternary structure, homodimer. Heterotetramer of two MnmE and two MnmG subunits. FAD serves as cofactor.

The protein resides in the cytoplasm. Functionally, NAD-binding protein involved in the addition of a carboxymethylaminomethyl (cmnm) group at the wobble position (U34) of certain tRNAs, forming tRNA-cmnm(5)s(2)U34. The sequence is that of tRNA uridine 5-carboxymethylaminomethyl modification enzyme MnmG from Bartonella quintana (strain Toulouse) (Rochalimaea quintana).